A 677-amino-acid polypeptide reads, in one-letter code: WD and tetratricopeptide repeats protein 1 (677 aa).

WD repeat units follow at residues 45–84, 88–129, 132–172, 182–222, and 265–305; these read GHSGCVNCLEWNEKGDLLASGSDDQHTIVWDPLHHKKLLS, GHTA…TIHM, DHTN…KHSE, GQLV…NHRK, and RLRV…RPYT. At S353 the chain carries Phosphoserine. 2 TPR repeats span residues 362–395 and 397–432; these read LERVKQQANEAFACQQWTQAIQLYSKAVQRAPHN and MLYGNRAAAYMKRKWDGDHYDALRDCLKAISLNPCH. A disordered region spans residues 487-509; that stretch reads NDGEEKKGPGGGAPVRLRSTSRK. A Phosphoserine modification is found at S511. WD repeat units lie at residues 535–575 and 578–617; these read NTTT…LVRV and GDESIVNCLQPHPSYCFLATSGIDPVVRLWNPRPESEDLT. The interval 655-677 is disordered; it reads SSGGAGASDDEDSSEGQVQCRPS.

Its pathway is protein modification; protein ubiquitination. Functionally, may function as a substrate receptor for CUL4-DDB1 E3 ubiquitin-protein ligase complex. The sequence is that of WD and tetratricopeptide repeats protein 1 (WDTC1) from Homo sapiens (Human).